The sequence spans 490 residues: Cytochrome P450 2C55 (490 aa).

Cysteine 435 contributes to the heme binding site.

This sequence belongs to the cytochrome P450 family. Heme is required as a cofactor.

Its subcellular location is the endoplasmic reticulum membrane. It is found in the microsome membrane. The catalysed reaction is an organic molecule + reduced [NADPH--hemoprotein reductase] + O2 = an alcohol + oxidized [NADPH--hemoprotein reductase] + H2O + H(+). Functionally, metabolizes arachidonic acid mainly to 19-hydroxyeicosatetraenoic acid (HETE). This chain is Cytochrome P450 2C55 (Cyp2c55), found in Rattus norvegicus (Rat).